Consider the following 521-residue polypeptide: MSEQNNAVLPKGVTQGEFNKAVQKFRALLGDDNVLVESDQLVPYNKIMMPVENAAHAPSAAVTATTVEQVQGVVKICNEHKIPIWTISTGRNFGYGSAAPVQRGQVILDLKKMNKIIKIDPEMCYALVEPGVTFGQMYDYIQENNLPVMLSFSAPSAIAGPVGNTMDRGVGYTPYGEHFMMQCGMEVVLANGDVYRTGMGGVPGSNTWQIFKWGYGPTLDGMFTQANYGICTKMGFWLMPKPPVFKPFEVIFEDEADIVEIVDALRPLRMSNTIPNSVVIASTLWEAGSAHLTRAQYTTEPGHTPDSVIKQMQKDTGMGAWNLYAALYGTQEQVDVNWKIVTDVFKKLGKGRIVTQEEAGDTQPFKYRAQLMSGVPNLQEFGLYNWRGGGGSMWFAPVSEARGSECKKQAAMAKRVLHKYGLDYVAEFIVAPRDMHHVIDVLYDRTNPEETKRADACFNELLDEFEKEGYAVYRVNTRFQDRVAQSYGPVKRKLEHAIKRAVDPNNILAPGRSGIDLNNDF.

The FAD-binding PCMH-type domain occupies 54–268; the sequence is AAHAPSAAVT…VEIVDALRPL (215 aa). Y384 carries the post-translational modification O-8alpha-FAD tyrosine.

Tetramer of two cytochrome subunits and two flavoprotein subunits. FAD is required as a cofactor.

The catalysed reaction is 4-methylphenol + 4 oxidized [azurin] + H2O = 4 reduced [azurin] + 4-hydroxybenzaldehyde + 4 H(+). It participates in aromatic compound metabolism; p-cresol degradation. Functionally, catalyzes the azurin dependent hydroxylation of the methyl group of 4-methylphenol to form 4-hydroxybenzaldehyde. In Pseudomonas putida (Arthrobacter siderocapsulatus), this protein is 4-cresol dehydrogenase [hydroxylating] flavoprotein subunit (pchF).